Consider the following 192-residue polypeptide: Putative inactive ribonuclease 11 (192 aa).

Residues 1 to 15 (MAVFLLLLALGLLLA) form the signal peptide. The interval 21–54 (RMKGTTEQFSQEEMQPAAKQTLEESANSTLSDKN) is disordered. Polar residues predominate over residues 43–54 (EESANSTLSDKN). N-linked (GlcNAc...) asparagine glycosylation is found at Asn47 and Asn104.

Belongs to the pancreatic ribonuclease family.

It is found in the secreted. The polypeptide is Putative inactive ribonuclease 11 (Rnase11) (Mus musculus (Mouse)).